Reading from the N-terminus, the 598-residue chain is Elongation factor 4 (598 aa).

The tr-type G domain occupies 4-181; the sequence is SKIRNFSIIA…AVIEKIPAPK (178 aa). Residues 16–21 and 128–131 contribute to the GTP site; these read DHGKST and NKID.

This sequence belongs to the TRAFAC class translation factor GTPase superfamily. Classic translation factor GTPase family. LepA subfamily.

The protein localises to the cell membrane. It catalyses the reaction GTP + H2O = GDP + phosphate + H(+). Its function is as follows. Required for accurate and efficient protein synthesis under certain stress conditions. May act as a fidelity factor of the translation reaction, by catalyzing a one-codon backward translocation of tRNAs on improperly translocated ribosomes. Back-translocation proceeds from a post-translocation (POST) complex to a pre-translocation (PRE) complex, thus giving elongation factor G a second chance to translocate the tRNAs correctly. Binds to ribosomes in a GTP-dependent manner. The chain is Elongation factor 4 from Mycoplasma mobile (strain ATCC 43663 / 163K / NCTC 11711) (Mesomycoplasma mobile).